Reading from the N-terminus, the 364-residue chain is Protein PTOV1 homolog (364 aa).

The segment at Ala-187–Val-207 is disordered.

This sequence belongs to the Mediator complex subunit 25 family. PTOV1 subfamily.

The protein is Protein PTOV1 homolog of Drosophila melanogaster (Fruit fly).